The primary structure comprises 141 residues: Nucleoside diphosphate kinase (141 aa).

Residues K11, F59, R87, T93, R104, and N114 each contribute to the ATP site.

This sequence belongs to the NDK family. As to quaternary structure, homotetramer. Mg(2+) is required as a cofactor.

The protein resides in the cytoplasm. The enzyme catalyses a 2'-deoxyribonucleoside 5'-diphosphate + ATP = a 2'-deoxyribonucleoside 5'-triphosphate + ADP. The catalysed reaction is a ribonucleoside 5'-diphosphate + ATP = a ribonucleoside 5'-triphosphate + ADP. In terms of biological role, major role in the synthesis of nucleoside triphosphates other than ATP. The ATP gamma phosphate is transferred to the NDP beta phosphate via a ping-pong mechanism, using a phosphorylated active-site intermediate. This is Nucleoside diphosphate kinase from Saccharophagus degradans (strain 2-40 / ATCC 43961 / DSM 17024).